We begin with the raw amino-acid sequence, 113 residues long: Protein FMC1 homolog (113 aa).

The interval 94 to 113 (SAGLVGLQLPHQPGGKGWEP) is disordered.

It belongs to the FMC1 family. Interacts with ATPAF2.

Its subcellular location is the mitochondrion. In terms of biological role, plays a role in the assembly/stability of the mitochondrial membrane ATP synthase (F(1)F(0) ATP synthase or Complex V). This chain is Protein FMC1 homolog, found in Rattus norvegicus (Rat).